A 275-amino-acid polypeptide reads, in one-letter code: NADPH-dependent 7-cyano-7-deazaguanine reductase (275 aa).

Substrate is bound at residue 81 to 83 (VES). Position 83 to 84 (83 to 84 (SK)) interacts with NADPH. The active-site Thioimide intermediate is Cys-182. Asp-189 serves as the catalytic Proton donor. 221–222 (HE) contacts substrate. An NADPH-binding site is contributed by 250–251 (RG).

Belongs to the GTP cyclohydrolase I family. QueF type 2 subfamily. Homodimer.

It is found in the cytoplasm. The catalysed reaction is 7-aminomethyl-7-carbaguanine + 2 NADP(+) = 7-cyano-7-deazaguanine + 2 NADPH + 3 H(+). Its pathway is tRNA modification; tRNA-queuosine biosynthesis. Catalyzes the NADPH-dependent reduction of 7-cyano-7-deazaguanine (preQ0) to 7-aminomethyl-7-deazaguanine (preQ1). The polypeptide is NADPH-dependent 7-cyano-7-deazaguanine reductase (Polaromonas sp. (strain JS666 / ATCC BAA-500)).